The chain runs to 151 residues: Gene 55 protein (151 aa).

The polypeptide is Gene 55 protein (55) (Mycobacterium phage D29 (Mycobacteriophage D29)).